Consider the following 250-residue polypeptide: Cell division protein ZapD (250 aa).

Belongs to the ZapD family. As to quaternary structure, interacts with FtsZ.

The protein localises to the cytoplasm. Cell division factor that enhances FtsZ-ring assembly. Directly interacts with FtsZ and promotes bundling of FtsZ protofilaments, with a reduction in FtsZ GTPase activity. The chain is Cell division protein ZapD from Yersinia enterocolitica serotype O:8 / biotype 1B (strain NCTC 13174 / 8081).